Consider the following 90-residue polypeptide: MAHKKAGGSSRNGRDSAGRRLGVKLYGGQLAVAGNIIVRQRGTTWWPGQNVGMGRDHTLFALTDGHVTFKKGLKGRTYISVLPANLEAAE.

Belongs to the bacterial ribosomal protein bL27 family.

The polypeptide is Large ribosomal subunit protein bL27 (Paracoccus denitrificans (strain Pd 1222)).